Consider the following 414-residue polypeptide: Secernin-1 (414 aa).

It belongs to the peptidase C69 family. Secernin subfamily.

The protein localises to the cytoplasm. Functionally, regulates exocytosis in mast cells. Increases both the extent of secretion and the sensitivity of mast cells to stimulation with calcium. The chain is Secernin-1 (Scrn1) from Mus musculus (Mouse).